A 313-amino-acid polypeptide reads, in one-letter code: Protein FixB (313 aa).

255–283 (LYLAVGISGQIQHMVGANASQTIFAINKD) provides a ligand contact to FAD.

This sequence belongs to the ETF alpha-subunit/FixB family. In terms of assembly, heterodimer of FixA and FixB.

Its pathway is amine and polyamine metabolism; carnitine metabolism. Functionally, required for anaerobic carnitine reduction. May bring reductant to CaiA. The polypeptide is Protein FixB (Escherichia coli O6:K15:H31 (strain 536 / UPEC)).